Here is a 957-residue protein sequence, read N- to C-terminus: Glycine dehydrogenase (decarboxylating) (957 aa).

Lys708 carries the N6-(pyridoxal phosphate)lysine modification.

The protein belongs to the GcvP family. As to quaternary structure, the glycine cleavage system is composed of four proteins: P, T, L and H. Requires pyridoxal 5'-phosphate as cofactor.

It catalyses the reaction N(6)-[(R)-lipoyl]-L-lysyl-[glycine-cleavage complex H protein] + glycine + H(+) = N(6)-[(R)-S(8)-aminomethyldihydrolipoyl]-L-lysyl-[glycine-cleavage complex H protein] + CO2. The glycine cleavage system catalyzes the degradation of glycine. The P protein binds the alpha-amino group of glycine through its pyridoxal phosphate cofactor; CO(2) is released and the remaining methylamine moiety is then transferred to the lipoamide cofactor of the H protein. The polypeptide is Glycine dehydrogenase (decarboxylating) (Shigella sonnei (strain Ss046)).